The primary structure comprises 141 residues: MARLTSIIALFAVALLVADAYAYRTTITTVEVEENRQGREERCRQMSAREELRSCEQYLRQQSRDVLQMRGIENPWRREGGSFDECCRELKNVDEECRCDMLEEIAREEQRQARGQEGRQMLQKARNLPSMCGIRPQRCDF.

Residues Met-1–Ala-22 form the signal peptide. A propeptide spanning residues Tyr-23–Asn-35 is cleaved from the precursor. Intrachain disulfides connect Cys-43/Cys-97, Cys-55/Cys-86, Cys-87/Cys-132, and Cys-99/Cys-139.

It belongs to the 2S seed storage albumins family. As to quaternary structure, the mature protein consists of a small and a large chain linked by 2 disulfide bonds.

Its subcellular location is the vacuole. The protein resides in the aleurone grain. Functionally, this is a 2S seed storage protein. This is 2S seed storage albumin protein from Cucurbita maxima (Pumpkin).